Reading from the N-terminus, the 218-residue chain is Nuclear cap-binding protein subunit 2 (218 aa).

MRNA contacts are provided by residues Tyr-24, Tyr-49, 118-122 (TIDLD), 129-133 (RQFGR), and 139-140 (QV). Residues 46–124 (ATIYVGNLSF…REITIDLDPG (79 aa)) form the RRM domain. The span at 176 to 194 (DPHKNHHHHHHGHHHHHGQ) shows a compositional bias: basic residues. Residues 176–200 (DPHKNHHHHHHGHHHHHGQPHAAAA) form a disordered region.

It belongs to the RRM NCBP2 family. In terms of assembly, component of the nuclear cap-binding complex (CBC).

The protein localises to the nucleus. Component of the cap-binding complex (CBC) involved in the nuclear export of capped U snRNAs. The CBC complex is required for efficient pre-mRNA splicing through efficient commitment complex and spliceosome formation; and involved in rRNA processing at sites A0, A1 and A2. The chain is Nuclear cap-binding protein subunit 2 (CBC2) from Eremothecium gossypii (strain ATCC 10895 / CBS 109.51 / FGSC 9923 / NRRL Y-1056) (Yeast).